We begin with the raw amino-acid sequence, 430 residues long: Adenylosuccinate synthetase (430 aa).

Residues 12–18 (GDEGKGK) and 40–42 (GHT) each bind GTP. The active-site Proton acceptor is the Asp-13. The Mg(2+) site is built by Asp-13 and Gly-40. Residues 13–16 (DEGK), 38–41 (NAGH), Thr-128, Arg-142, Gln-223, Thr-238, and Arg-302 each bind IMP. His-41 acts as the Proton donor in catalysis. 298-304 (TTTGRPR) is a substrate binding site. Residues Arg-304, 330-332 (SID), and 412-414 (SVG) contribute to the GTP site.

This sequence belongs to the adenylosuccinate synthetase family. As to quaternary structure, homodimer. Mg(2+) is required as a cofactor.

It is found in the cytoplasm. The catalysed reaction is IMP + L-aspartate + GTP = N(6)-(1,2-dicarboxyethyl)-AMP + GDP + phosphate + 2 H(+). The protein operates within purine metabolism; AMP biosynthesis via de novo pathway; AMP from IMP: step 1/2. In terms of biological role, plays an important role in the de novo pathway of purine nucleotide biosynthesis. Catalyzes the first committed step in the biosynthesis of AMP from IMP. The chain is Adenylosuccinate synthetase from Streptococcus agalactiae serotype Ia (strain ATCC 27591 / A909 / CDC SS700).